The chain runs to 708 residues: Glycine--tRNA ligase beta subunit (708 aa).

Belongs to the class-II aminoacyl-tRNA synthetase family. Tetramer of two alpha and two beta subunits.

The protein resides in the cytoplasm. It carries out the reaction tRNA(Gly) + glycine + ATP = glycyl-tRNA(Gly) + AMP + diphosphate. The polypeptide is Glycine--tRNA ligase beta subunit (Paracidovorax citrulli (strain AAC00-1) (Acidovorax citrulli)).